The chain runs to 1464 residues: Gag-Pol polyprotein (1464 aa).

Gly-2 carries the N-myristoyl glycine; by host lipid modification. The segment at 7–31 is interaction with Gp41; sequence VLSGKKTDELEKVRLRPGGKKRYML. A Nuclear export signal motif is present at residues 16 to 22; that stretch reads LEKVRLR. Positions 26–32 match the Nuclear localization signal motif; that stretch reads KKRYMLK. The residue at position 130 (Tyr-130) is a Phosphotyrosine; by host. Residues 186–223 are interaction with human PPIA/CYPA and NUP153; it reads NCVGEHQAAMQIIREIINEEAADWDQQHPSPGPMPAGQ. Residues 274-360 form a dimerization/Multimerization of capsid protein p24 region; that stretch reads YNPTNILDIK…GGPGQKARLM (87 aa). 2 CCHC-type zinc fingers span residues 387–404 and 408–425; these read VTCW…QCKA and QGCW…KCPE. The segment covering 483 to 499 has biased composition (basic and acidic residues); the sequence is AKELHATREEAEGEQRE. A disordered region spans residues 483 to 504; that stretch reads AKELHATREEAEGEQRETLQGG. Residues 511 to 515 are dimerization of protease; sequence PQFSL. The Peptidase A2 domain maps to 531–600; it reads EVLLDTGADD…PINIFGRNIL (70 aa). The For protease activity; shared with dimeric partner role is filled by Asp-535. 2 dimerization of protease regions span residues 559 to 565 and 598 to 610; these read GIGGFIN and NILN…LNFP. The region spanning 654–844 is the Reverse transcriptase domain; the sequence is GQLEEAPPTN…PFKWMGYELW (191 aa). The Mg(2+) site is built by Asp-719, Asp-794, and Asp-795. Residues 836-844 form an RT 'primer grip' region; sequence FKWMGYELW. Residues 1006-1022 carry the Tryptophan repeat motif motif; that stretch reads WDQWWTDYWQVTWIPEW. One can recognise an RNase H type-1 domain in the interval 1042-1165; that stretch reads LEGVETYYTD…VDHLVSQGIR (124 aa). Mg(2+) is bound by residues Asp-1051, Glu-1086, Asp-1106, and Asp-1157. The segment at 1171-1212 adopts an Integrase-type zinc-finger fold; sequence EKIEPAQEEHEKYHNNVKELVHKFGIPQLVARQIVNSCDKCQ. His-1180, His-1184, Cys-1208, and Cys-1211 together coordinate Zn(2+). Residues 1222 to 1373 form the Integrase catalytic domain; the sequence is VNSELGTWQM…PAERIVNMIT (152 aa). Asp-1232, Asp-1284, and Glu-1320 together coordinate Mg(2+). A DNA-binding region (integrase-type) is located at residues 1391-1438; it reads FRVYYREGRDQLWKGPGDLLWKGEGAVIIKVGTEIKVIPRRKAKIIRN.

In terms of assembly, homotrimer; further assembles as hexamers of trimers. Interacts with gp41 (via C-terminus). Interacts with host CALM1; this interaction induces a conformational change in the Matrix protein, triggering exposure of the myristate group. Interacts with host AP3D1; this interaction allows the polyprotein trafficking to multivesicular bodies during virus assembly. Part of the pre-integration complex (PIC) which is composed of viral genome, matrix protein, Vpr and integrase. As to quaternary structure, homodimer; the homodimer further multimerizes as homohexamers or homopentamers. Interacts with human PPIA/CYPA. Interacts with human NUP153. Interacts with host PDZD8; this interaction stabilizes the capsid. Interacts with monkey TRIM5; this interaction destabilizes the capsid. Homodimer, whose active site consists of two apposed aspartic acid residues. In terms of assembly, heterodimer of p66 RT and p51 RT (RT p66/p51). Heterodimerization of RT is essential for DNA polymerase activity. The overall folding of the subdomains is similar in p66 RT and p51 RT but the spatial arrangements of the subdomains are dramatically different. As to quaternary structure, homotetramer; may further associate as a homohexadecamer. Part of the pre-integration complex (PIC) which is composed of viral genome, matrix protein, Vpr and integrase. Interacts with human SMARCB1/INI1 and human PSIP1/LEDGF isoform 1. Interacts with human KPNA3; this interaction might play a role in nuclear import of the pre-integration complex. Interacts with human NUP153; this interaction might play a role in nuclear import of the pre-integration complex. The cofactor is Mg(2+). Post-translationally, specific enzymatic cleavages by the viral protease yield mature proteins. The protease is released by autocatalytic cleavage. The polyprotein is cleaved during and after budding, this process is termed maturation. Proteolytic cleavage of p66 RT removes the RNase H domain to yield the p51 RT subunit. Nucleocapsid protein p7 might be further cleaved after virus entry.

It is found in the host cell membrane. The protein localises to the host endosome. Its subcellular location is the host multivesicular body. The protein resides in the virion membrane. It localises to the host nucleus. It is found in the host cytoplasm. The protein localises to the virion. It catalyses the reaction Endopeptidase for which the P1 residue is preferably hydrophobic.. The catalysed reaction is Endohydrolysis of RNA in RNA/DNA hybrids. Three different cleavage modes: 1. sequence-specific internal cleavage of RNA. Human immunodeficiency virus type 1 and Moloney murine leukemia virus enzymes prefer to cleave the RNA strand one nucleotide away from the RNA-DNA junction. 2. RNA 5'-end directed cleavage 13-19 nucleotides from the RNA end. 3. DNA 3'-end directed cleavage 15-20 nucleotides away from the primer terminus.. It carries out the reaction 3'-end directed exonucleolytic cleavage of viral RNA-DNA hybrid.. The enzyme catalyses DNA(n) + a 2'-deoxyribonucleoside 5'-triphosphate = DNA(n+1) + diphosphate. Its activity is regulated as follows. Protease: The viral protease is inhibited by many synthetic protease inhibitors (PIs), such as amprenavir, atazanavir, indinavir, loprinavir, nelfinavir, ritonavir and saquinavir. Use of protease inhibitors in tritherapy regimens permit more ambitious therapeutic strategies. Reverse transcriptase/ribonuclease H: RT can be inhibited either by nucleoside RT inhibitors (NRTIs) or by non nucleoside RT inhibitors (NNRTIs). NRTIs act as chain terminators, whereas NNRTIs inhibit DNA polymerization by binding a small hydrophobic pocket near the RT active site and inducing an allosteric change in this region. Classical NRTIs are abacavir, adefovir (PMEA), didanosine (ddI), lamivudine (3TC), stavudine (d4T), tenofovir (PMPA), zalcitabine (ddC), and zidovudine (AZT). Classical NNRTIs are atevirdine (BHAP U-87201E), delavirdine, efavirenz (DMP-266), emivirine (I-EBU), and nevirapine (BI-RG-587). The tritherapies used as a basic effective treatment of AIDS associate two NRTIs and one NNRTI. In terms of biological role, mediates, with Gag polyprotein, the essential events in virion assembly, including binding the plasma membrane, making the protein-protein interactions necessary to create spherical particles, recruiting the viral Env proteins, and packaging the genomic RNA via direct interactions with the RNA packaging sequence (Psi). Gag-Pol polyprotein may regulate its own translation, by the binding genomic RNA in the 5'-UTR. At low concentration, the polyprotein would promote translation, whereas at high concentration, the polyprotein would encapsidate genomic RNA and then shut off translation. Targets the polyprotein to the plasma membrane via a multipartite membrane-binding signal, that includes its myristoylated N-terminus. Matrix protein is part of the pre-integration complex. Implicated in the release from host cell mediated by Vpu. Binds to RNA. Functionally, forms the conical core that encapsulates the genomic RNA-nucleocapsid complex in the virion. Most core are conical, with only 7% tubular. The core is constituted by capsid protein hexamer subunits. The core is disassembled soon after virion entry. Host restriction factors such as TRIM5-alpha or TRIMCyp bind retroviral capsids and cause premature capsid disassembly, leading to blocks in reverse transcription. Capsid restriction by TRIM5 is one of the factors which restricts HIV-1 to the human species. Host PIN1 apparently facilitates the virion uncoating. On the other hand, interactions with PDZD8 or CYPA stabilize the capsid. Its function is as follows. Encapsulates and protects viral dimeric unspliced genomic RNA (gRNA). Binds these RNAs through its zinc fingers. Acts as a nucleic acid chaperone which is involved in rearangement of nucleic acid secondary structure during gRNA retrotranscription. Also facilitates template switch leading to recombination. As part of the polyprotein, participates in gRNA dimerization, packaging, tRNA incorporation and virion assembly. In terms of biological role, aspartyl protease that mediates proteolytic cleavages of Gag and Gag-Pol polyproteins during or shortly after the release of the virion from the plasma membrane. Cleavages take place as an ordered, step-wise cascade to yield mature proteins. This process is called maturation. Displays maximal activity during the budding process just prior to particle release from the cell. Also cleaves Nef and Vif, probably concomitantly with viral structural proteins on maturation of virus particles. Hydrolyzes host EIF4GI and PABP1 in order to shut off the capped cellular mRNA translation. The resulting inhibition of cellular protein synthesis serves to ensure maximal viral gene expression and to evade host immune response. Multifunctional enzyme that converts the viral RNA genome into dsDNA in the cytoplasm, shortly after virus entry into the cell. This enzyme displays a DNA polymerase activity that can copy either DNA or RNA templates, and a ribonuclease H (RNase H) activity that cleaves the RNA strand of RNA-DNA heteroduplexes in a partially processive 3' to 5' endonucleasic mode. Conversion of viral genomic RNA into dsDNA requires many steps. A tRNA(3)-Lys binds to the primer-binding site (PBS) situated at the 5'-end of the viral RNA. RT uses the 3' end of the tRNA primer to perform a short round of RNA-dependent minus-strand DNA synthesis. The reading proceeds through the U5 region and ends after the repeated (R) region which is present at both ends of viral RNA. The portion of the RNA-DNA heteroduplex is digested by the RNase H, resulting in a ssDNA product attached to the tRNA primer. This ssDNA/tRNA hybridizes with the identical R region situated at the 3' end of viral RNA. This template exchange, known as minus-strand DNA strong stop transfer, can be either intra- or intermolecular. RT uses the 3' end of this newly synthesized short ssDNA to perform the RNA-dependent minus-strand DNA synthesis of the whole template. RNase H digests the RNA template except for two polypurine tracts (PPTs) situated at the 5'-end and near the center of the genome. It is not clear if both polymerase and RNase H activities are simultaneous. RNase H probably can proceed both in a polymerase-dependent (RNA cut into small fragments by the same RT performing DNA synthesis) and a polymerase-independent mode (cleavage of remaining RNA fragments by free RTs). Secondly, RT performs DNA-directed plus-strand DNA synthesis using the PPTs that have not been removed by RNase H as primers. PPTs and tRNA primers are then removed by RNase H. The 3' and 5' ssDNA PBS regions hybridize to form a circular dsDNA intermediate. Strand displacement synthesis by RT to the PBS and PPT ends produces a blunt ended, linear dsDNA copy of the viral genome that includes long terminal repeats (LTRs) at both ends. Functionally, catalyzes viral DNA integration into the host chromosome, by performing a series of DNA cutting and joining reactions. This enzyme activity takes place after virion entry into a cell and reverse transcription of the RNA genome in dsDNA. The first step in the integration process is 3' processing. This step requires a complex comprising the viral genome, matrix protein, Vpr and integrase. This complex is called the pre-integration complex (PIC). The integrase protein removes 2 nucleotides from each 3' end of the viral DNA, leaving recessed CA OH's at the 3' ends. In the second step, the PIC enters cell nucleus. This process is mediated through integrase and Vpr proteins, and allows the virus to infect a non dividing cell. This ability to enter the nucleus is specific of lentiviruses, other retroviruses cannot and rely on cell division to access cell chromosomes. In the third step, termed strand transfer, the integrase protein joins the previously processed 3' ends to the 5' ends of strands of target cellular DNA at the site of integration. The 5'-ends are produced by integrase-catalyzed staggered cuts, 5 bp apart. A Y-shaped, gapped, recombination intermediate results, with the 5'-ends of the viral DNA strands and the 3' ends of target DNA strands remaining unjoined, flanking a gap of 5 bp. The last step is viral DNA integration into host chromosome. This involves host DNA repair synthesis in which the 5 bp gaps between the unjoined strands are filled in and then ligated. Since this process occurs at both cuts flanking the HIV genome, a 5 bp duplication of host DNA is produced at the ends of HIV-1 integration. Alternatively, Integrase may catalyze the excision of viral DNA just after strand transfer, this is termed disintegration. The polypeptide is Gag-Pol polyprotein (gag-pol) (Human immunodeficiency virus type 2 subtype B (isolate EHO) (HIV-2)).